A 316-amino-acid chain; its full sequence is tRNA dimethylallyltransferase (316 aa).

13–20 (GPTAVGKT) provides a ligand contact to ATP. 15–20 (TAVGKT) provides a ligand contact to substrate. Residues 38 to 41 (DSIQ) are interaction with substrate tRNA.

Belongs to the IPP transferase family. As to quaternary structure, monomer. Requires Mg(2+) as cofactor.

It catalyses the reaction adenosine(37) in tRNA + dimethylallyl diphosphate = N(6)-dimethylallyladenosine(37) in tRNA + diphosphate. Catalyzes the transfer of a dimethylallyl group onto the adenine at position 37 in tRNAs that read codons beginning with uridine, leading to the formation of N6-(dimethylallyl)adenosine (i(6)A). This chain is tRNA dimethylallyltransferase, found in Staphylococcus carnosus (strain TM300).